The primary structure comprises 157 residues: Tripartite terminase subunit 2 (157 aa).

A disordered region spans residues 1-69 (MSWAKQRVPF…DGEDGHALPD (69 aa)). Positions 11-27 (LDDDDGEEENDVQDDVD) are enriched in acidic residues.

Belongs to the herpesviridae TRM2 protein family. As to quaternary structure, associates with TRM1 and TRM3 to form the tripartite terminase complex.

The protein localises to the host nucleus. Functionally, component of the molecular motor that translocates viral genomic DNA in empty capsid during DNA packaging. Forms a tripartite terminase complex together with TRM1 and TRM3 in the host cytoplasm. Once the complex reaches the host nucleus, it interacts with the capsid portal vertex. This portal forms a ring in which genomic DNA is translocated into the capsid. The chain is Tripartite terminase subunit 2 from Homo sapiens (Human).